Reading from the N-terminus, the 297-residue chain is Palmitoyl-protein thioesterase ABHD10, mitochondrial (297 aa).

The transit peptide at 1–43 directs the protein to the mitochondrion; the sequence is MAAWAPCRRWGWAAVSFGRHPGLSASLARKPPRAWWLSACRQK. The 128-residue stretch at 69 to 196 folds into the AB hydrolase-1 domain; the sequence is IIFIPGYLSN…EIEMKGEWTL (128 aa). Active-site charge relay system residues include Ser-143, Asp-240, and His-270.

The protein belongs to the AB hydrolase superfamily.

It is found in the mitochondrion. It carries out the reaction S-hexadecanoyl-L-cysteinyl-[protein] + H2O = L-cysteinyl-[protein] + hexadecanoate + H(+). The catalysed reaction is mycophenolic acid O-acyl-beta-D-glucuronide + H2O = mycophenolate + D-glucuronate + H(+). Inhibited by palmostatin-B. Acts as an acyl-protein thioesterase that hydrolyzes fatty acids from acylated residues in proteins. Regulates the mitochondrial S-depalmitoylation of the nucleophilic active site residue of peroxiredoxin-5/PRDX5, a key antioxidant protein, therefore modulating mitochondrial antioxidant ability. Also catalyzes the deglucuronidation of mycophenolic acid acyl-glucuronide, an active metabolite of the immunosuppressant drug mycophenolate. The chain is Palmitoyl-protein thioesterase ABHD10, mitochondrial from Mus musculus (Mouse).